Here is a 120-residue protein sequence, read N- to C-terminus: NAD(P)H-quinone oxidoreductase subunit 3, chloroplastic (120 aa).

A run of 3 helical transmembrane segments spans residues 10 to 30 (LWFFLVIASIVPILAFTISEI), 64 to 84 (MFALVFVVFDVETVFLYPWAI), and 89 to 109 (LGISAFIEALLFILILMVGLV).

It belongs to the complex I subunit 3 family. As to quaternary structure, NDH is composed of at least 16 different subunits, 5 of which are encoded in the nucleus.

It is found in the plastid. Its subcellular location is the chloroplast thylakoid membrane. It catalyses the reaction a plastoquinone + NADH + (n+1) H(+)(in) = a plastoquinol + NAD(+) + n H(+)(out). It carries out the reaction a plastoquinone + NADPH + (n+1) H(+)(in) = a plastoquinol + NADP(+) + n H(+)(out). In terms of biological role, NDH shuttles electrons from NAD(P)H:plastoquinone, via FMN and iron-sulfur (Fe-S) centers, to quinones in the photosynthetic chain and possibly in a chloroplast respiratory chain. The immediate electron acceptor for the enzyme in this species is believed to be plastoquinone. Couples the redox reaction to proton translocation, and thus conserves the redox energy in a proton gradient. This is NAD(P)H-quinone oxidoreductase subunit 3, chloroplastic from Chara vulgaris (Common stonewort).